We begin with the raw amino-acid sequence, 320 residues long: Aspartate carbamoyltransferase catalytic subunit (320 aa).

Positions 68 and 69 each coordinate carbamoyl phosphate. Position 96 (Lys-96) interacts with L-aspartate. Residues Arg-118, His-148, and Gln-151 each coordinate carbamoyl phosphate. L-aspartate is bound by residues Arg-181 and Arg-236. Carbamoyl phosphate contacts are provided by Gly-277 and Pro-278.

This sequence belongs to the aspartate/ornithine carbamoyltransferase superfamily. ATCase family. In terms of assembly, heterododecamer (2C3:3R2) of six catalytic PyrB chains organized as two trimers (C3), and six regulatory PyrI chains organized as three dimers (R2).

The catalysed reaction is carbamoyl phosphate + L-aspartate = N-carbamoyl-L-aspartate + phosphate + H(+). Its pathway is pyrimidine metabolism; UMP biosynthesis via de novo pathway; (S)-dihydroorotate from bicarbonate: step 2/3. Catalyzes the condensation of carbamoyl phosphate and aspartate to form carbamoyl aspartate and inorganic phosphate, the committed step in the de novo pyrimidine nucleotide biosynthesis pathway. This chain is Aspartate carbamoyltransferase catalytic subunit, found in Variovorax paradoxus (strain S110).